We begin with the raw amino-acid sequence, 332 residues long: Glycerol-3-phosphate dehydrogenase [NAD(P)+] (332 aa).

The NADPH site is built by S11, W12, R32, R33, and K106. K106 and G136 together coordinate sn-glycerol 3-phosphate. A140 provides a ligand contact to NADPH. Sn-glycerol 3-phosphate-binding residues include K191, D244, S254, R255, and N256. K191 (proton acceptor) is an active-site residue. R255 contributes to the NADPH binding site. NADPH-binding residues include V280 and E282.

This sequence belongs to the NAD-dependent glycerol-3-phosphate dehydrogenase family.

The protein localises to the cytoplasm. The enzyme catalyses sn-glycerol 3-phosphate + NAD(+) = dihydroxyacetone phosphate + NADH + H(+). The catalysed reaction is sn-glycerol 3-phosphate + NADP(+) = dihydroxyacetone phosphate + NADPH + H(+). It participates in membrane lipid metabolism; glycerophospholipid metabolism. Its function is as follows. Catalyzes the reduction of the glycolytic intermediate dihydroxyacetone phosphate (DHAP) to sn-glycerol 3-phosphate (G3P), the key precursor for phospholipid synthesis. In Corynebacterium jeikeium (strain K411), this protein is Glycerol-3-phosphate dehydrogenase [NAD(P)+].